A 499-amino-acid polypeptide reads, in one-letter code: Cytochrome P450 11B1, mitochondrial (499 aa).

The transit peptide at 1 to 24 directs the protein to the mitochondrion; the sequence is MALRVTADVWLARPWQCLHRTRAL. Cys-446 contacts heme.

The protein belongs to the cytochrome P450 family. It depends on heme as a cofactor. As to expression, adrenal zona fasciculata/reticularis.

Its subcellular location is the mitochondrion inner membrane. The enzyme catalyses a steroid + 2 reduced [adrenodoxin] + O2 + 2 H(+) = an 11beta-hydroxysteroid + 2 oxidized [adrenodoxin] + H2O. It carries out the reaction 21-hydroxyprogesterone + 2 reduced [adrenodoxin] + O2 + 2 H(+) = corticosterone + 2 oxidized [adrenodoxin] + H2O. It catalyses the reaction 21-hydroxyprogesterone + 2 reduced [adrenodoxin] + O2 + 2 H(+) = 18-hydroxy-11-deoxycorticosterone + 2 oxidized [adrenodoxin] + H2O. The catalysed reaction is 21-hydroxyprogesterone + 2 reduced [adrenodoxin] + O2 + 2 H(+) = 19-hydroxy-11-deoxycorticosterone + 2 oxidized [adrenodoxin] + H2O. The enzyme catalyses 11-deoxycortisol + 2 reduced [adrenodoxin] + O2 + 2 H(+) = cortisol + 2 oxidized [adrenodoxin] + H2O. It carries out the reaction cortisol + 2 reduced [adrenodoxin] + O2 + 2 H(+) = 18-hydroxycortisol + 2 oxidized [adrenodoxin] + H2O. It catalyses the reaction 11-deoxycortisol + 2 reduced [adrenodoxin] + O2 + 2 H(+) = 18-hydroxy-11-deoxycortisol + 2 oxidized [adrenodoxin] + H2O. It functions in the pathway steroid biosynthesis; glucocorticoid biosynthesis. It participates in steroid hormone biosynthesis. Its function is as follows. A cytochrome P450 monooxygenase involved in the biosynthesis of adrenal corticoids. Catalyzes a variety of reactions that are essential for many species, including detoxification, defense, and the formation of endogenous chemicals like steroid hormones. Steroid 11beta, 18- and 19-hydroxylase with preferred regioselectivity at 11beta, then 18, and lastly 19. Catalyzes the hydroxylation of 11-deoxycortisol and 11-deoxycorticosterone (21-hydroxyprogesterone) at 11beta position, yielding cortisol or corticosterone, respectively, but cannot produce aldosterone. Mechanistically, uses molecular oxygen inserting one oxygen atom into a substrate for hydroxylation and reducing the second into a water molecule. Two electrons are provided by NADPH via a two-protein mitochondrial transfer system comprising flavoprotein FDXR (adrenodoxin/ferredoxin reductase) and nonheme iron-sulfur protein FDX1 or FDX2 (adrenodoxin/ferredoxin). Due to its lack of 18-oxidation activity, it is incapable of generating aldosterone. Could also be involved in the androgen metabolic pathway. This is Cytochrome P450 11B1, mitochondrial (Cyp11b1) from Rattus norvegicus (Rat).